The chain runs to 236 residues: Eukaryotic translation initiation factor 3 subunit J (236 aa).

The interval 1–88 (MADDWESAAD…EAEAQRVASL (88 aa)) is disordered. Residues 28-46 (GEDEDEDIKDSWEDEEEKK) are compositionally biased toward acidic residues. Basic and acidic residues-rich tracts occupy residues 47–58 (DEEKPTKTEAPA) and 68–77 (AKLEQQARLE).

This sequence belongs to the eIF-3 subunit J family. As to quaternary structure, component of the eukaryotic translation initiation factor 3 (eIF-3) complex. The eIF-3 complex interacts with pix.

It is found in the cytoplasm. Its function is as follows. Component of the eukaryotic translation initiation factor 3 (eIF-3) complex, which is involved in protein synthesis of a specialized repertoire of mRNAs and, together with other initiation factors, stimulates binding of mRNA and methionyl-tRNAi to the 40S ribosome. The eIF-3 complex specifically targets and initiates translation of a subset of mRNAs involved in cell proliferation. This chain is Eukaryotic translation initiation factor 3 subunit J, found in Drosophila erecta (Fruit fly).